The chain runs to 62 residues: Alkaline proteinase (62 aa).

The Peptidase S8 domain occupies 1-62; it reads GSTSYIYDTS…FAPGTSVLSS (62 aa). Asp21 serves as the catalytic Charge relay system.

It localises to the secreted. Its activity is regulated as follows. Inhibited by phenylmethanesulfonyl fluoride (PMSF) and chymostatin (CST), but not by Bowman-Birk type trypsin-chymotrypsin inhibitor (BBI). Its function is as follows. Serine protease. May be involved in the invasion of grains and hydrolysis of grain proteins. This Fusarium culmorum protein is Alkaline proteinase.